The chain runs to 776 residues: Lysyl oxidase homolog 2 (776 aa).

The first 25 residues, 1–25, serve as a signal peptide directing secretion; it reads MEIPFGSCLYSCLALLVLLPSLSLA. 4 consecutive SRCR domains span residues 61–162, 191–305, 329–428, and 438–546; these read VRLA…VVCS, IRPI…VSCV, VRLR…VRCN, and VRLN…VACS. Intrachain disulfides connect C87–C151, C100–C161, C131–C141, C221–C294, C234–C304, C268–C278, C354–C417, C367–C427, and C398–C408. N267 is a glycosylation site (N-linked (GlcNAc...) asparagine). A glycan (N-linked (GlcNAc...) asparagine) is linked at N291. Residue N458 is glycosylated (N-linked (GlcNAc...) asparagine). Intrachain disulfides connect C467/C532, C480/C545, and C514/C524. The segment at 550–753 is lysyl-oxidase like; it reads PDLVLNAEIV…WMYNCHVGGA (204 aa). Residues D551 and L552 each contribute to the Ca(2+) site. Intrachain disulfides connect C575–C627, C581–C697, C659–C675, and C665–C687. Cu cation contacts are provided by H628, H630, and H632. The N-linked (GlcNAc...) asparagine glycan is linked to N646. Positions 655 to 691 form a cross-link, lysine tyrosylquinone (Lys-Tyr); it reads KASFCLEDTECEGDIQKSYECANFGEQGITMGCWDMY. Y691 bears the 2',4',5'-topaquinone mark. Residues E724, D726, N729, and N730 each contribute to the Ca(2+) site. C734 and C748 form a disulfide bridge.

The protein belongs to the lysyl oxidase family. Component of some chromatin repressor complex. Interacts with SNAI1. Interacts with TAF10. Interacts with HSPA5. Interacts with EFEMP2. Requires Cu cation as cofactor. Lysine tyrosylquinone residue is required as a cofactor. In terms of processing, the lysine tyrosylquinone cross-link (LTQ) is generated by condensation of the epsilon-amino group of a lysine with a topaquinone produced by oxidation of tyrosine. Post-translationally, N-glycosylated. N-glycosylation on Asn-458 and Asn-646 may be essential for proper folding and secretion; may be composed of a fucosylated carbohydrates attached to a trimannose N-linked glycan core.

The protein localises to the secreted. It is found in the extracellular space. Its subcellular location is the extracellular matrix. It localises to the basement membrane. The protein resides in the nucleus. The protein localises to the chromosome. It is found in the endoplasmic reticulum. The catalysed reaction is L-lysyl-[protein] + O2 + H2O = (S)-2-amino-6-oxohexanoyl-[protein] + H2O2 + NH4(+). Its activity is regulated as follows. Specifically inhibited by a mouse monoclonal antibody AB0023, inhibition occurs in a non-competitive manner. In terms of biological role, mediates the post-translational oxidative deamination of lysine residues on target proteins leading to the formation of deaminated lysine (allysine). Acts as a transcription corepressor and specifically mediates deamination of trimethylated 'Lys-4' of histone H3 (H3K4me3), a specific tag for epigenetic transcriptional activation. Shows no activity against histone H3 when it is trimethylated on 'Lys-9' (H3K9me3) or 'Lys-27' (H3K27me3) or when 'Lys-4' is monomethylated (H3K4me1) or dimethylated (H3K4me2). Also mediates deamination of methylated TAF10, a member of the transcription factor IID (TFIID) complex, which induces release of TAF10 from promoters, leading to inhibition of TFIID-dependent transcription. LOXL2-mediated deamination of TAF10 results in transcriptional repression of genes required for embryonic stem cell pluripotency including POU5F1/OCT4, NANOG, KLF4 and SOX2. Involved in epithelial to mesenchymal transition (EMT) via interaction with SNAI1 and participates in repression of E-cadherin CDH1, probably by mediating deamination of histone H3. During EMT, involved with SNAI1 in negatively regulating pericentromeric heterochromatin transcription. SNAI1 recruits LOXL2 to pericentromeric regions to oxidize histone H3 and repress transcription which leads to release of heterochromatin component CBX5/HP1A, enabling chromatin reorganization and acquisition of mesenchymal traits. Interacts with the endoplasmic reticulum protein HSPA5 which activates the IRE1-XBP1 pathway of the unfolded protein response, leading to expression of several transcription factors involved in EMT and subsequent EMT induction. When secreted into the extracellular matrix, promotes cross-linking of extracellular matrix proteins by mediating oxidative deamination of peptidyl lysine residues in precursors to fibrous collagen and elastin. Acts as a regulator of sprouting angiogenesis, probably via collagen IV scaffolding. Acts as a regulator of chondrocyte differentiation, probably by regulating expression of factors that control chondrocyte differentiation. The protein is Lysyl oxidase homolog 2 (Loxl2) of Rattus norvegicus (Rat).